The sequence spans 671 residues: DNA ligase (671 aa).

Residues 32 to 36, 81 to 82, and E113 each bind NAD(+); these read DAEYD and SL. K115 serves as the catalytic N6-AMP-lysine intermediate. NAD(+) contacts are provided by R136, E173, K290, and K314. Residues C408, C411, C426, and C432 each coordinate Zn(2+). In terms of domain architecture, BRCT spans 593-671; it reads EIDSPFAGKT…ETEMLRLLGS (79 aa).

This sequence belongs to the NAD-dependent DNA ligase family. LigA subfamily. It depends on Mg(2+) as a cofactor. The cofactor is Mn(2+).

It carries out the reaction NAD(+) + (deoxyribonucleotide)n-3'-hydroxyl + 5'-phospho-(deoxyribonucleotide)m = (deoxyribonucleotide)n+m + AMP + beta-nicotinamide D-nucleotide.. Its function is as follows. DNA ligase that catalyzes the formation of phosphodiester linkages between 5'-phosphoryl and 3'-hydroxyl groups in double-stranded DNA using NAD as a coenzyme and as the energy source for the reaction. It is essential for DNA replication and repair of damaged DNA. The chain is DNA ligase from Escherichia coli O1:K1 / APEC.